A 431-amino-acid polypeptide reads, in one-letter code: Serine--tRNA ligase (431 aa).

L-serine is bound at residue 238 to 240; it reads TAE. 269 to 271 contributes to the ATP binding site; it reads RSE. Residue Glu292 participates in L-serine binding. Residue 356–359 coordinates ATP; the sequence is EISS. Residue Ser392 participates in L-serine binding.

This sequence belongs to the class-II aminoacyl-tRNA synthetase family. Type-1 seryl-tRNA synthetase subfamily. Homodimer. The tRNA molecule binds across the dimer.

It localises to the cytoplasm. It catalyses the reaction tRNA(Ser) + L-serine + ATP = L-seryl-tRNA(Ser) + AMP + diphosphate + H(+). It carries out the reaction tRNA(Sec) + L-serine + ATP = L-seryl-tRNA(Sec) + AMP + diphosphate + H(+). The protein operates within aminoacyl-tRNA biosynthesis; selenocysteinyl-tRNA(Sec) biosynthesis; L-seryl-tRNA(Sec) from L-serine and tRNA(Sec): step 1/1. In terms of biological role, catalyzes the attachment of serine to tRNA(Ser). Is also able to aminoacylate tRNA(Sec) with serine, to form the misacylated tRNA L-seryl-tRNA(Sec), which will be further converted into selenocysteinyl-tRNA(Sec). The protein is Serine--tRNA ligase of Pectobacterium carotovorum subsp. carotovorum (strain PC1).